The sequence spans 120 residues: Large ribosomal subunit protein uL18 (120 aa).

It belongs to the universal ribosomal protein uL18 family. Part of the 50S ribosomal subunit; part of the 5S rRNA/L5/L18/L25 subcomplex. Contacts the 5S and 23S rRNAs.

In terms of biological role, this is one of the proteins that bind and probably mediate the attachment of the 5S RNA into the large ribosomal subunit, where it forms part of the central protuberance. In Exiguobacterium sp. (strain ATCC BAA-1283 / AT1b), this protein is Large ribosomal subunit protein uL18.